We begin with the raw amino-acid sequence, 235 residues long: Phosphoribosylaminoimidazole-succinocarboxamide synthase (235 aa).

Belongs to the SAICAR synthetase family.

It catalyses the reaction 5-amino-1-(5-phospho-D-ribosyl)imidazole-4-carboxylate + L-aspartate + ATP = (2S)-2-[5-amino-1-(5-phospho-beta-D-ribosyl)imidazole-4-carboxamido]succinate + ADP + phosphate + 2 H(+). It participates in purine metabolism; IMP biosynthesis via de novo pathway; 5-amino-1-(5-phospho-D-ribosyl)imidazole-4-carboxamide from 5-amino-1-(5-phospho-D-ribosyl)imidazole-4-carboxylate: step 1/2. The sequence is that of Phosphoribosylaminoimidazole-succinocarboxamide synthase from Chlorobaculum parvum (strain DSM 263 / NCIMB 8327) (Chlorobium vibrioforme subsp. thiosulfatophilum).